The following is a 340-amino-acid chain: Putative esterase YheT (340 aa).

The AB hydrolase-1 domain occupies 73–312; the sequence is PRLVVFHGLE…TEHGGHVGFI (240 aa). Residues S153, D280, and H308 each act as charge relay system in the active site.

It belongs to the AB hydrolase superfamily. AB hydrolase 4 family.

In Escherichia coli (strain K12), this protein is Putative esterase YheT (yheT).